Here is a 275-residue protein sequence, read N- to C-terminus: Lectin (275 aa).

The N-terminal stretch at 1–30 (MASLQTQMISFYLIFLSILLTTIFFFKVNS) is a signal peptide. Residues D111 and G129 each contribute to the D-glucose site. Mn(2+) is bound by residues E149 and D151. Positions 151, 153, 155, and 159 each coordinate Ca(2+). Mn(2+) contacts are provided by D159 and H166. A propeptide spanning residues 211–217 (NSLEEEN) is cleaved from the precursor. D-glucose-binding residues include G246 and A247. Positions 270-275 (KQAADA) are excised as a propeptide.

It belongs to the leguminous lectin family. As to quaternary structure, heterotetramer of two alpha and two beta chains. The mature form consists of two chains, alpha and beta, produced by cleavage of the immature protein. These remain cleaved, yet fold together to form one subunit.

Its function is as follows. D-mannose specific lectin. The polypeptide is Lectin (Lens culinaris (Lentil)).